A 377-amino-acid polypeptide reads, in one-letter code: N5-carboxyaminoimidazole ribonucleotide synthase (377 aa).

ATP contacts are provided by residues Arg-93, Lys-133, 138–144, 175–178, Glu-183, His-206, and 257–258; these read GYDGKGQ, EEFV, and NE. Positions 97-287 constitute an ATP-grasp domain; it reads KALLDNAGVR…QFENHLRAVC (191 aa).

The protein belongs to the PurK/PurT family. In terms of assembly, homodimer.

The catalysed reaction is 5-amino-1-(5-phospho-beta-D-ribosyl)imidazole + hydrogencarbonate + ATP = 5-carboxyamino-1-(5-phospho-D-ribosyl)imidazole + ADP + phosphate + 2 H(+). It participates in purine metabolism; IMP biosynthesis via de novo pathway; 5-amino-1-(5-phospho-D-ribosyl)imidazole-4-carboxylate from 5-amino-1-(5-phospho-D-ribosyl)imidazole (N5-CAIR route): step 1/2. Functionally, catalyzes the ATP-dependent conversion of 5-aminoimidazole ribonucleotide (AIR) and HCO(3)(-) to N5-carboxyaminoimidazole ribonucleotide (N5-CAIR). This is N5-carboxyaminoimidazole ribonucleotide synthase from Vibrio parahaemolyticus serotype O3:K6 (strain RIMD 2210633).